We begin with the raw amino-acid sequence, 202 residues long: Small ribosomal subunit protein uS4 (202 aa).

Over residues 1–13 the composition is skewed to basic residues; sequence MSRYRGPRLRITR. The tract at residues 1-43 is disordered; it reads MSRYRGPRLRITRRLGDLPGLTRKAAKRSHPPGQHGQARRKRS. An S4 RNA-binding domain is found at 90-152; sequence NRLDNVCFRL…KGSKKLAEAN (63 aa).

This sequence belongs to the universal ribosomal protein uS4 family. In terms of assembly, part of the 30S ribosomal subunit. Contacts protein S5. The interaction surface between S4 and S5 is involved in control of translational fidelity.

Its function is as follows. One of the primary rRNA binding proteins, it binds directly to 16S rRNA where it nucleates assembly of the body of the 30S subunit. In terms of biological role, with S5 and S12 plays an important role in translational accuracy. This chain is Small ribosomal subunit protein uS4, found in Prochlorococcus marinus (strain MIT 9303).